The primary structure comprises 404 residues: MNKKIIILGTLDTKGEEFKFIKDIIEKEGLETIVIDVGVVGEAKLRPNIDKKEVAIVGGSSIEDLIKKKDRGYAMEVMMKGSAAIVKRLSKEEGISGIISLGGSGGTSIASYAMRALEVGIPKVMVSTLASGDTRPYVGEKDITMIYSVVDISGINTLSSKILSNAAYALIGMVKGKAPELKGEKPLIGATMFGVTTKGVNIAKEYLENNGYEVLVFHATGAGGRAMEDLIRSGYIKGVLDMTTTEWCDEVVGGVLNAGPNRLEAASDMGIPQVVAPGALDMVNFGPIETVPEEFKKRNLYKHNATVTLMRTTKEENIEIGKVIGEKLNRAKKDTALFIPLKGVSAIDAEGEVFYGYEEDKALFNTLKETVNKDKVQIVEMNNNINDEEFAIAMAKKLINMMEK.

It belongs to the UPF0261 family.

The protein is UPF0261 protein CTC_01794 of Clostridium tetani (strain Massachusetts / E88).